A 132-amino-acid chain; its full sequence is Small ribosomal subunit protein uS8 (132 aa).

It belongs to the universal ribosomal protein uS8 family. In terms of assembly, part of the 30S ribosomal subunit. Contacts proteins S5 and S12.

In terms of biological role, one of the primary rRNA binding proteins, it binds directly to 16S rRNA central domain where it helps coordinate assembly of the platform of the 30S subunit. This Borrelia duttonii (strain Ly) protein is Small ribosomal subunit protein uS8.